A 115-amino-acid chain; its full sequence is Macrophage migration inhibitory factor (115 aa).

Proline 2 functions as the Proton acceptor; via imino nitrogen in the catalytic mechanism. Positions 33 and 65 each coordinate substrate. Residue lysine 78 is modified to N6-acetyllysine; alternate. Lysine 78 is subject to N6-succinyllysine; alternate. Asparagine 98 is a substrate binding site.

The protein belongs to the MIF family. As to quaternary structure, homotrimer. Interacts with CXCR2 extracellular domain. Interacts with the CD74 extracellular domain, USO1, COPS5 and BNIPL.

The protein localises to the secreted. The protein resides in the cytoplasm. The catalysed reaction is 3-phenylpyruvate = enol-phenylpyruvate. It catalyses the reaction L-dopachrome = 5,6-dihydroxyindole-2-carboxylate. Functionally, pro-inflammatory cytokine involved in the innate immune response to bacterial pathogens. The expression of MIF at sites of inflammation suggests a role as mediator in regulating the function of macrophages in host defense. Counteracts the anti-inflammatory activity of glucocorticoids. Has phenylpyruvate tautomerase and dopachrome tautomerase activity (in vitro), but the physiological substrate is not known. It is not clear whether the tautomerase activity has any physiological relevance, and whether it is important for cytokine activity. In Homo sapiens (Human), this protein is Macrophage migration inhibitory factor.